The chain runs to 407 residues: uncharacterized protein (407 aa).

Residues 1 to 27 form the signal peptide; the sequence is MRILAMTRAHNAGRTLAATLDSLAVFS.

This is an uncharacterized protein from Mycobacterium bovis (strain ATCC BAA-935 / AF2122/97).